We begin with the raw amino-acid sequence, 236 residues long: Transmembrane protein 70 homolog, mitochondrial (236 aa).

The N-terminal 64 residues, 1–64, are a transit peptide targeting the mitochondrion; the sequence is MLGLRAMLPK…WLSVKSTKTE (64 aa). Transmembrane regions (helical) follow at residues 83-103 and 116-136; these read MVKFFSLSTSLAGLAAQPILL and VFLCTVGGFFTFVTPLLLHFI.

It belongs to the TMEM70 family. Associates with mitochondrial complex I assembly intermediates during its biogenesis.

It localises to the mitochondrion membrane. Scaffold protein that participates in the c-ring assembly of mitochondrial ATP synthase (F(1)F(0) ATP synthase or complex V). Also binds the mitochondrial proton-transporting ATP synthase complex I and may play a role in the stability of its membrane-bound subassemblies. The chain is Transmembrane protein 70 homolog, mitochondrial from Drosophila melanogaster (Fruit fly).